The primary structure comprises 112 residues: UPF0060 membrane protein IL2332 (112 aa).

A run of 4 helical transmembrane segments spans residues 10 to 30 (LGLF…PYLW), 36 to 56 (SAWL…LLTL), 64 to 84 (VYAA…KAVE), and 90 to 110 (TYDA…AVGW).

It belongs to the UPF0060 family.

It localises to the cell inner membrane. The protein is UPF0060 membrane protein IL2332 of Idiomarina loihiensis (strain ATCC BAA-735 / DSM 15497 / L2-TR).